Consider the following 240-residue polypeptide: UPF0309 protein in nagA 3'region (240 aa).

One can recognise an SIS domain in the interval 31 to 206 (IVKRLVQGGI…CAQIIEILHE (176 aa)).

The protein belongs to the UPF0309 family.

The protein is UPF0309 protein in nagA 3'region of Lysinibacillus sphaericus (Bacillus sphaericus).